A 66-amino-acid chain; its full sequence is Large ribosomal subunit protein bL31 (66 aa).

Residues cysteine 16, cysteine 18, cysteine 36, and cysteine 39 each contribute to the Zn(2+) site.

It belongs to the bacterial ribosomal protein bL31 family. Type A subfamily. As to quaternary structure, part of the 50S ribosomal subunit. Requires Zn(2+) as cofactor.

In terms of biological role, binds the 23S rRNA. In Bacillus licheniformis (strain ATCC 14580 / DSM 13 / JCM 2505 / CCUG 7422 / NBRC 12200 / NCIMB 9375 / NCTC 10341 / NRRL NRS-1264 / Gibson 46), this protein is Large ribosomal subunit protein bL31.